We begin with the raw amino-acid sequence, 251 residues long: Probable ATP-dependent transporter ycf16 (251 aa).

An ABC transporter domain is found at 6 to 250 (LEIKDLYASV…EKHGYDWITQ (245 aa)). 38-45 (GPNGSGKS) contacts ATP.

This sequence belongs to the ABC transporter superfamily. Ycf16 family.

It is found in the plastid. Its subcellular location is the chloroplast. The chain is Probable ATP-dependent transporter ycf16 (ycf16) from Pyropia yezoensis (Susabi-nori).